A 212-amino-acid chain; its full sequence is Probable transaldolase (212 aa).

Catalysis depends on K84, which acts as the Schiff-base intermediate with substrate.

Belongs to the transaldolase family. Type 3B subfamily.

The protein localises to the cytoplasm. It catalyses the reaction D-sedoheptulose 7-phosphate + D-glyceraldehyde 3-phosphate = D-erythrose 4-phosphate + beta-D-fructose 6-phosphate. The protein operates within carbohydrate degradation; pentose phosphate pathway; D-glyceraldehyde 3-phosphate and beta-D-fructose 6-phosphate from D-ribose 5-phosphate and D-xylulose 5-phosphate (non-oxidative stage): step 2/3. Functionally, transaldolase is important for the balance of metabolites in the pentose-phosphate pathway. This chain is Probable transaldolase, found in Bacillus pumilus (strain SAFR-032).